A 515-amino-acid chain; its full sequence is 3,4-dehydroadipyl-CoA semialdehyde dehydrogenase (515 aa).

Residues glutamate 255 and cysteine 294 contribute to the active site. The interval 470-515 is disordered; sequence VMPTCLHGGPRARRRRRGVGRSARAGDVSPPLRRAGRPRGAGSPVA. The span at 479-488 shows a compositional bias: basic residues; it reads PRARRRRRGV. Positions 489–515 are enriched in low complexity; sequence GRSARAGDVSPPLRRAGRPRGAGSPVA.

The protein belongs to the aldehyde dehydrogenase family. Homodimer.

It carries out the reaction (3Z)-6-oxohex-3-enoyl-CoA + NADP(+) + H2O = cis-3,4-dehydroadipyl-CoA + NADPH + 2 H(+). Catalyzes the NADP-dependent oxidation of 3,4-dehydroadipyl-CoA semialdehyde to form cis-3,4-dehydroadipyl-CoA. This Aromatoleum evansii (Azoarcus evansii) protein is 3,4-dehydroadipyl-CoA semialdehyde dehydrogenase (boxD).